The sequence spans 729 residues: MSGAVLVAIAAAVGNLLQGWDNATIAGAVLYIKKEFNLESNPSVEGLIVAMSLIGATLITTCSGGVADWLGRRPMLILSSILYFVGSLVMLWSPNVYVLLLGRLLDGFGVGLVVTLVPIYISETAPPEIRGLLNTLPQFTGSGGMFLSYCMVFGMSLMPSPSWRLMLGVLFIPSLVFFFLTVFFLPESPRWLVSKGRMLEAKRVLQRLRGREDVSGEMALLVEGLGIGGETTIEEYIIGPADEVTDDHDIAVDKDQIKLYGAEEGLSWVARPVKGGSTMSVLSRHGSTMSRRQGSLIDPLVTLFGSVHEKMPDTGSMRSALFPHFGSMFSVGGNQPRHEDWDEENLVGEGEDYPSDHGDDSEDDLHSPLISRQTTSMEKDMPHTAHGTLSTFRHGSQVQGAQGEGAGSMGIGGGWQVAWKWTEREDESGQKEEGFPGSRRGSIVSLPGGDGTGEADFVQASALVSQPALYSKDLLKEHTIGPAMVHPSETTKGSIWHDLHDPGVKRALVVGVGLQILQQFSGINGVLYYTPQILEQAGVGILLSNMGISSSSASLLISALTTFVMLPAIAVAMRLMDLSGRRTLLLTTIPILIASLLVLVISNLVHMNSIVHAVLSTVSVVLYFCFFVMGFGPAPNILCSEIFPTRVRGICIAICALTFWICDIIVTYSLPVLLKSIGLAGVFGMYAIVCCISWVFVFIKVPETKGMPLEVITEFFSVGARQAEAAKNE.

A run of 6 helical transmembrane segments spans residues 1 to 21, 47 to 67, 81 to 101, 104 to 124, 139 to 159, and 165 to 185; these read MSGA…QGWD, LIVA…GGVA, ILYF…VLLL, LLDG…ISET, FTGS…SLMP, and LMLG…VFFL. The span at 347-363 shows a compositional bias: acidic residues; the sequence is VGEGEDYPSDHGDDSED. 2 disordered regions span residues 347–367 and 423–442; these read VGEG…DLHS and ERED…RRGS. Residues 423 to 434 show a composition bias toward basic and acidic residues; sequence EREDESGQKEEG. Phosphoserine occurs at positions 438 and 448. Transmembrane regions (helical) follow at residues 507–527, 553–573, 585–605, 610–630, 650–670, and 679–699; these read ALVV…NGVL, ASLL…AVAM, LLTT…SNLV, IVHA…FVMG, ICIA…TYSL, and LAGV…FVFI.

This sequence belongs to the major facilitator superfamily. Sugar transporter (TC 2.A.1.1) family. In terms of tissue distribution, mostly expressed in roots and stems, and, to a lower extent, in juvenile and adult leaves, and in flower tissues.

The protein localises to the vacuole membrane. It catalyses the reaction D-glucose(out) + H(+)(in) = D-glucose(in) + H(+)(out). The catalysed reaction is sucrose(out) + H(+)(in) = sucrose(in) + H(+)(out). Its function is as follows. Sugar proton-coupled antiporter which contributes to vacuolar sugar import (e.g. monosaccharides including glucose, sucrose and fructose), particularly during stress responses (e.g. in response to cold). This chain is Monosaccharide-sensing protein 2, found in Arabidopsis thaliana (Mouse-ear cress).